Reading from the N-terminus, the 376-residue chain is Outer membrane porin C (376 aa).

A signal peptide spans 1–21; the sequence is MKLRVLSLMVPALLVAGTAGA.

Belongs to the Gram-negative porin family. In terms of assembly, homotrimer.

It is found in the cell outer membrane. Forms pores that allow passive diffusion of small molecules across the outer membrane. The chain is Outer membrane porin C (ompC) from Serratia marcescens.